Here is a 271-residue protein sequence, read N- to C-terminus: Aquaporin-2 (271 aa).

The Cytoplasmic segment spans residues 1-11 (MWELRSIAFSR). The helical transmembrane segment at 12 to 32 (AVLAEFLATLLFVFFGLGSAL) threads the bilayer. The Extracellular segment spans residues 33 to 40 (NWPQALPS). A helical transmembrane segment spans residues 41–59 (VLQIAMAFGLAIGTLVQAL). Residues 60-64 (GHVSG) are Cytoplasmic-facing. The segment at residues 65 to 74 (AHINPAVTVA) is an intramembrane region (discontinuously helical). The NPA 1 motif lies at 68–70 (NPA). Topologically, residues 75–85 (CLVGCHVSFLR) are cytoplasmic. A helical transmembrane segment spans residues 86–107 (AVFYVAAQLLGAVAGAALLHEI). Residues 108-127 (TPPAIRGDLAVNALNNNSTA) lie on the Extracellular side of the membrane. Asn123 and Asn124 each carry an N-linked (GlcNAc...) asparagine glycan. A helical membrane pass occupies residues 128 to 148 (GQAVTVELFLTLQLVLCIFPS). Residues 149-156 (TDKRRGKQ) lie on the Cytoplasmic side of the membrane. The chain crosses the membrane as a helical span at residues 157 to 176 (LGHPALSIGFSVALGHLLGI). Residues 177–180 (HYTG) lie on the Extracellular side of the membrane. Positions 181–193 (CSMNPARSLAPAI) form an intramembrane region, discontinuously helical. The NPA 2 signature appears at 184-186 (NPA). Over 194-201 (VTGKFDDH) the chain is Extracellular. The chain crosses the membrane as a helical span at residues 202 to 222 (WVFWIGPLVGAIVASLLYNYV). Residues 223–271 (LFPPAKSLSERLAVLKGLEPDTDWEEREVRRRQSVELHSPQSLPRGTKA) lie on the Cytoplasmic side of the membrane. The disordered stretch occupies residues 249-271 (REVRRRQSVELHSPQSLPRGTKA). Ser256 is subject to Phosphoserine. The span at 261 to 271 (SPQSLPRGTKA) shows a compositional bias: polar residues.

The protein belongs to the MIP/aquaporin (TC 1.A.8) family. In terms of assembly, homotetramer. Post-translationally, ser-256 phosphorylation is necessary and sufficient for expression at the apical membrane. Endocytosis is not phosphorylation-dependent. In terms of processing, N-glycosylated. Expressed in renal collecting tubules.

It is found in the apical cell membrane. The protein localises to the basolateral cell membrane. It localises to the cell membrane. The protein resides in the cytoplasmic vesicle membrane. Its subcellular location is the golgi apparatus. It is found in the trans-Golgi network membrane. The enzyme catalyses H2O(in) = H2O(out). It catalyses the reaction glycerol(in) = glycerol(out). Its function is as follows. Forms a water-specific channel that provides the plasma membranes of renal collecting duct with high permeability to water, thereby permitting water to move in the direction of an osmotic gradient. Could also be permeable to glycerol. The chain is Aquaporin-2 from Ovis aries (Sheep).